The chain runs to 199 residues: RNA pyrophosphohydrolase (199 aa).

Residues 6–154 (GYRPNVGIVL…KREVYELALS (149 aa)) enclose the Nudix hydrolase domain. Positions 38-59 (GGIQHGESPEQAMYRELHEEVG) match the Nudix box motif.

This sequence belongs to the Nudix hydrolase family. RppH subfamily. It depends on a divalent metal cation as a cofactor.

In terms of biological role, accelerates the degradation of transcripts by removing pyrophosphate from the 5'-end of triphosphorylated RNA, leading to a more labile monophosphorylated state that can stimulate subsequent ribonuclease cleavage. In Polynucleobacter asymbioticus (strain DSM 18221 / CIP 109841 / QLW-P1DMWA-1) (Polynucleobacter necessarius subsp. asymbioticus), this protein is RNA pyrophosphohydrolase.